The following is a 222-amino-acid chain: Probable transaldolase 2 (222 aa).

Lys-90 serves as the catalytic Schiff-base intermediate with substrate.

Belongs to the transaldolase family. Type 3B subfamily.

The protein resides in the cytoplasm. It catalyses the reaction D-sedoheptulose 7-phosphate + D-glyceraldehyde 3-phosphate = D-erythrose 4-phosphate + beta-D-fructose 6-phosphate. The protein operates within carbohydrate degradation; pentose phosphate pathway; D-glyceraldehyde 3-phosphate and beta-D-fructose 6-phosphate from D-ribose 5-phosphate and D-xylulose 5-phosphate (non-oxidative stage): step 2/3. Functionally, transaldolase is important for the balance of metabolites in the pentose-phosphate pathway. The chain is Probable transaldolase 2 from Bacillus cereus (strain ATCC 14579 / DSM 31 / CCUG 7414 / JCM 2152 / NBRC 15305 / NCIMB 9373 / NCTC 2599 / NRRL B-3711).